The following is a 304-amino-acid chain: Phosphoribosylaminoimidazole-succinocarboxamide synthase (304 aa).

Belongs to the SAICAR synthetase family.

The catalysed reaction is 5-amino-1-(5-phospho-D-ribosyl)imidazole-4-carboxylate + L-aspartate + ATP = (2S)-2-[5-amino-1-(5-phospho-beta-D-ribosyl)imidazole-4-carboxamido]succinate + ADP + phosphate + 2 H(+). The protein operates within purine metabolism; IMP biosynthesis via de novo pathway; 5-amino-1-(5-phospho-D-ribosyl)imidazole-4-carboxamide from 5-amino-1-(5-phospho-D-ribosyl)imidazole-4-carboxylate: step 1/2. In Komagataella pastoris (Yeast), this protein is Phosphoribosylaminoimidazole-succinocarboxamide synthase (ADE1).